Consider the following 396-residue polypeptide: Putative O-antigen transporter (396 aa).

Transmembrane regions (helical) follow at residues 5-25, 32-52, 82-102, 107-127, 137-157, 163-183, 211-231, 286-306, 322-342, 348-368, and 372-392; these read ILLL…VLPY, IETF…SLIV, IVKL…LMYV, LIYP…FATW, AVVI…FILV, IVAA…ISIY, FFLS…LLSF, AIFG…LTTI, MFLL…MLIP, ILSR…FPLV, and GAWG…LFML.

The protein belongs to the polysaccharide synthase family.

It is found in the cell inner membrane. The protein operates within bacterial outer membrane biogenesis; LPS O-antigen biosynthesis. In terms of biological role, may be involved in the translocation process of the nascent O-polysaccharide molecules and/or its ligation to lipid A core units. In Shigella dysenteriae, this protein is Putative O-antigen transporter (rfbX).